The following is a 278-amino-acid chain: Formamidopyrimidine-DNA glycosylase (278 aa).

The Schiff-base intermediate with DNA role is filled by proline 2. Glutamate 3 acts as the Proton donor in catalysis. Catalysis depends on lysine 59, which acts as the Proton donor; for beta-elimination activity. Histidine 94, arginine 113, and lysine 154 together coordinate DNA. The FPG-type zinc-finger motif lies at 239 to 273 (KVHTKKGEFCIKCSSKIEKIKFKGRGTYFCPTCQK). Residue arginine 263 is the Proton donor; for delta-elimination activity of the active site.

The protein belongs to the FPG family. Monomer. The cofactor is Zn(2+).

The catalysed reaction is Hydrolysis of DNA containing ring-opened 7-methylguanine residues, releasing 2,6-diamino-4-hydroxy-5-(N-methyl)formamidopyrimidine.. The enzyme catalyses 2'-deoxyribonucleotide-(2'-deoxyribose 5'-phosphate)-2'-deoxyribonucleotide-DNA = a 3'-end 2'-deoxyribonucleotide-(2,3-dehydro-2,3-deoxyribose 5'-phosphate)-DNA + a 5'-end 5'-phospho-2'-deoxyribonucleoside-DNA + H(+). Involved in base excision repair of DNA damaged by oxidation or by mutagenic agents. Acts as a DNA glycosylase that recognizes and removes damaged bases. Has a preference for oxidized purines, such as 7,8-dihydro-8-oxoguanine (8-oxoG). Has AP (apurinic/apyrimidinic) lyase activity and introduces nicks in the DNA strand. Cleaves the DNA backbone by beta-delta elimination to generate a single-strand break at the site of the removed base with both 3'- and 5'-phosphates. The polypeptide is Formamidopyrimidine-DNA glycosylase (mutM) (Mycoplasmopsis pulmonis (strain UAB CTIP) (Mycoplasma pulmonis)).